The chain runs to 969 residues: Putative zinc protease mug138 (969 aa).

H68 provides a ligand contact to Zn(2+). E71 serves as the catalytic Proton acceptor. Zn(2+) contacts are provided by H72 and E149.

Belongs to the peptidase M16 family.

The protein localises to the cytoplasm. Functionally, has a role in meiosis. The polypeptide is Putative zinc protease mug138 (mug138) (Schizosaccharomyces pombe (strain 972 / ATCC 24843) (Fission yeast)).